Here is a 534-residue protein sequence, read N- to C-terminus: Serine/threonine-protein kinase Nek6 (534 aa).

The Protein kinase domain occupies 4-257 (YEVVEQIGRG…AGELLRHPYL (254 aa)). ATP contacts are provided by residues 10 to 18 (IGRGAYGSA) and lysine 33. Aspartate 129 (proton acceptor) is an active-site residue. Disordered stretches follow at residues 278–306 (KSNL…SSEA) and 425–449 (KAHT…SSPK).

This sequence belongs to the protein kinase superfamily. NEK Ser/Thr protein kinase family. NIMA subfamily. As to quaternary structure, interacts with DIS1. Post-translationally, ubiquitinated by the E3 ligase DIS1. Ubiquitination of NEK6 leads to its degradation via the 26S proteasome-dependent pathway. Expressed in anthers, pistils and leaves.

Its subcellular location is the cytoplasm. It catalyses the reaction L-seryl-[protein] + ATP = O-phospho-L-seryl-[protein] + ADP + H(+). The catalysed reaction is L-threonyl-[protein] + ATP = O-phospho-L-threonyl-[protein] + ADP + H(+). May be involved in plant development processes. The chain is Serine/threonine-protein kinase Nek6 from Oryza sativa subsp. japonica (Rice).